The following is a 103-amino-acid chain: Cell division protein CrgA (103 aa).

Helical transmembrane passes span 49–69 and 80–100; these read FVPL…VYYL and IGAW…LMTM.

This sequence belongs to the CrgA family.

It localises to the cell membrane. Its function is as follows. Involved in cell division. The protein is Cell division protein CrgA of Bifidobacterium longum (strain NCC 2705).